Here is a 183-residue protein sequence, read N- to C-terminus: Outer membrane protein H.8 (183 aa).

The signal sequence occupies residues 1–17 (MKAYLALISAAVIGLAA). Cysteine 18 carries the N-palmitoyl cysteine lipid modification. Cysteine 18 carries S-diacylglycerol cysteine lipidation. Residues 27 to 51 (AEATPAAEAPASEAPAAEAAPADAA) form a disordered region. Residues 57–183 (GNCAATVESN…LMNGKVTLVD (127 aa)) enclose the Plastocyanin-like domain. Cu cation contacts are provided by histidine 102, cysteine 166, histidine 171, and methionine 175.

It depends on Cu cation as a cofactor.

The protein localises to the cell outer membrane. This is Outer membrane protein H.8 from Neisseria meningitidis serogroup B (strain ATCC BAA-335 / MC58).